Consider the following 222-residue polypeptide: Glutathione S-transferase (222 aa).

The region spanning G3 to G83 is the GST N-terminal domain. Glutathione is bound by residues Y9, R45, Q54–V55, and Q67–S68. The GST C-terminal domain occupies D85–L208.

Belongs to the GST superfamily. Alpha family. Homodimer.

It is found in the cytoplasm. It carries out the reaction RX + glutathione = an S-substituted glutathione + a halide anion + H(+). Conjugation of reduced glutathione to a wide number of exogenous and endogenous hydrophobic electrophiles. The polypeptide is Glutathione S-transferase (Gallus gallus (Chicken)).